The sequence spans 182 residues: Large ribosomal subunit protein uL6 (182 aa).

It belongs to the universal ribosomal protein uL6 family. Part of the 50S ribosomal subunit.

This protein binds to the 23S rRNA, and is important in its secondary structure. It is located near the subunit interface in the base of the L7/L12 stalk, and near the tRNA binding site of the peptidyltransferase center. The polypeptide is Large ribosomal subunit protein uL6 (Methanocaldococcus jannaschii (strain ATCC 43067 / DSM 2661 / JAL-1 / JCM 10045 / NBRC 100440) (Methanococcus jannaschii)).